A 200-amino-acid chain; its full sequence is MAGFASANLLERVPEDEVLPAEFTVKAPPETDIWAKPPSTERFNAPILYKSIPLDTFKRARVAFSANWSQKYDQGGLIIVLNGNSGDRKWVKTGIEFTHDKPHLSTVAKDRWADWSLLPVPSGGTGATLEVVREPDDSLWIYLIQGVQKSPIREVTWVFAEEDVRDAWIGVYAARPSSAGGDLVVNFASLIIEVTDSTTK.

Functionally, involved in osmoadaptation. This is an uncharacterized protein from Emericella nidulans (strain FGSC A4 / ATCC 38163 / CBS 112.46 / NRRL 194 / M139) (Aspergillus nidulans).